Here is a 128-residue protein sequence, read N- to C-terminus: Head peptide (128 aa).

A signal peptide spans 1 to 22; that stretch reads MWKFASIVVLVVCLAWAVYCED. A Pyrrolidone carboxylic acid modification is found at Q23. P26 carries the post-translational modification Hydroxyproline; partial. The segment at 27 to 128 is disordered; it reads SLKTRFGRSA…GRANKKRAAN (102 aa). The residue at position 32 (F32) is a Phenylalanine amide. Positions 35–55 are excised as a propeptide; that stretch reads SADEPESDNYVSNDIMEKRSA. Q56 carries the pyrrolidone carboxylic acid modification. P59 is subject to Hydroxyproline; partial. A Phenylalanine amide modification is found at F65. Over residues 66–78 the composition is skewed to basic and acidic residues; sequence GRSEGAEVMEKRS. A propeptide spanning residues 68-79 is cleaved from the precursor; that stretch reads SEGAEVMEKRSA. Pyrrolidone carboxylic acid is present on Q80. At P83 the chain carries Hydroxyproline; partial. Residue F89 is modified to Phenylalanine amide. Positions 92–128 are excised as a propeptide; that stretch reads SVANPESDGYMRKRSAESEPFVTRIRHGRANKKRAAN. Positions 115–128 are enriched in basic residues; sequence RIRHGRANKKRAAN.

It belongs to the NPY family. Expressed in the brain, terminal ganglion, and midgut of adults: numerous neurosecretory cells and midgut endocrine cells. Expression is dynamic depending on reproductive cycle.

It is found in the secreted. Functionally, has a role in inhibiting host-seeking behavior during a reproductive cycle. This chain is Head peptide, found in Aedes aegypti (Yellowfever mosquito).